The chain runs to 367 residues: 5-amino-6-(D-ribitylamino)uracil--L-tyrosine 4-hydroxyphenyl transferase (367 aa).

One can recognise a Radical SAM core domain in the interval 54-288 (ITYIENWNIN…VYAISRLMFR (235 aa)). Residues cysteine 68, cysteine 72, and cysteine 75 each contribute to the [4Fe-4S] cluster site.

Belongs to the radical SAM superfamily. CofH family. As to quaternary structure, consists of two subunits, CofG and CofH. Requires [4Fe-4S] cluster as cofactor.

It carries out the reaction 5-amino-6-(D-ribitylamino)uracil + L-tyrosine + S-adenosyl-L-methionine = 5-amino-5-(4-hydroxybenzyl)-6-(D-ribitylimino)-5,6-dihydrouracil + 2-iminoacetate + 5'-deoxyadenosine + L-methionine + H(+). Its pathway is cofactor biosynthesis; coenzyme F0 biosynthesis. In terms of biological role, catalyzes the radical-mediated synthesis of 5-amino-5-(4-hydroxybenzyl)-6-(D-ribitylimino)-5,6-dihydrouracil from 5-amino-6-(D-ribitylamino)uracil and L-tyrosine. The protein is 5-amino-6-(D-ribitylamino)uracil--L-tyrosine 4-hydroxyphenyl transferase of Methanothermobacter thermautotrophicus (strain ATCC 29096 / DSM 1053 / JCM 10044 / NBRC 100330 / Delta H) (Methanobacterium thermoautotrophicum).